The chain runs to 169 residues: Peptide methionine sulfoxide reductase MsrA (169 aa).

The active site involves cysteine 10.

The protein belongs to the MsrA Met sulfoxide reductase family.

The enzyme catalyses L-methionyl-[protein] + [thioredoxin]-disulfide + H2O = L-methionyl-(S)-S-oxide-[protein] + [thioredoxin]-dithiol. The catalysed reaction is [thioredoxin]-disulfide + L-methionine + H2O = L-methionine (S)-S-oxide + [thioredoxin]-dithiol. Functionally, has an important function as a repair enzyme for proteins that have been inactivated by oxidation. Catalyzes the reversible oxidation-reduction of methionine sulfoxide in proteins to methionine. The polypeptide is Peptide methionine sulfoxide reductase MsrA (Streptococcus pyogenes serotype M2 (strain MGAS10270)).